The sequence spans 349 residues: Threonine-rich protein (349 aa).

An N-terminal signal peptide occupies residues 1–19 (MKGLTLACIAATVVAASHA). An N-linked (GlcNAc...) asparagine glycan is attached at asparagine 257. A disordered region spans residues 300–326 (QPDVSPMSVRKRRQAESAEEDDDLVGD). Positions 316–326 (SAEEDDDLVGD) are enriched in acidic residues. Positions 316 to 349 (SAEEDDDLVGDMEDLKELEQEIQEALEEVEKLDV) form a coiled coil.

As to expression, component of the acid-insoluble and acid-soluble organic matrix of calcified layers of the shell (at protein level).

The protein resides in the secreted. The chain is Threonine-rich protein from Lottia gigantea (Giant owl limpet).